A 194-amino-acid polypeptide reads, in one-letter code: Imidazole glycerol phosphate synthase subunit HisH (194 aa).

One can recognise a Glutamine amidotransferase type-1 domain in the interval 1-194 (MIIIDTGCAN…QLLKNFVENL (194 aa)). Catalysis depends on Cys75, which acts as the Nucleophile. Catalysis depends on residues His175 and Glu177.

In terms of assembly, heterodimer of HisH and HisF.

The protein localises to the cytoplasm. The catalysed reaction is 5-[(5-phospho-1-deoxy-D-ribulos-1-ylimino)methylamino]-1-(5-phospho-beta-D-ribosyl)imidazole-4-carboxamide + L-glutamine = D-erythro-1-(imidazol-4-yl)glycerol 3-phosphate + 5-amino-1-(5-phospho-beta-D-ribosyl)imidazole-4-carboxamide + L-glutamate + H(+). It catalyses the reaction L-glutamine + H2O = L-glutamate + NH4(+). It participates in amino-acid biosynthesis; L-histidine biosynthesis; L-histidine from 5-phospho-alpha-D-ribose 1-diphosphate: step 5/9. IGPS catalyzes the conversion of PRFAR and glutamine to IGP, AICAR and glutamate. The HisH subunit catalyzes the hydrolysis of glutamine to glutamate and ammonia as part of the synthesis of IGP and AICAR. The resulting ammonia molecule is channeled to the active site of HisF. The protein is Imidazole glycerol phosphate synthase subunit HisH of Mannheimia succiniciproducens (strain KCTC 0769BP / MBEL55E).